We begin with the raw amino-acid sequence, 208 residues long: Outer-membrane lipoprotein carrier protein (208 aa).

The N-terminal stretch at 1 to 22 (MKKRLCAVLLASPLLFSAAVFA) is a signal peptide.

The protein belongs to the LolA family. As to quaternary structure, monomer.

The protein localises to the periplasm. In terms of biological role, participates in the translocation of lipoproteins from the inner membrane to the outer membrane. Only forms a complex with a lipoprotein if the residue after the N-terminal Cys is not an aspartate (The Asp acts as a targeting signal to indicate that the lipoprotein should stay in the inner membrane). The polypeptide is Outer-membrane lipoprotein carrier protein (Shewanella baltica (strain OS223)).